A 368-amino-acid polypeptide reads, in one-letter code: Phosphoribosylformylglycinamidine cyclo-ligase (368 aa).

The protein belongs to the AIR synthase family.

The protein localises to the cytoplasm. It catalyses the reaction 2-formamido-N(1)-(5-O-phospho-beta-D-ribosyl)acetamidine + ATP = 5-amino-1-(5-phospho-beta-D-ribosyl)imidazole + ADP + phosphate + H(+). The protein operates within purine metabolism; IMP biosynthesis via de novo pathway; 5-amino-1-(5-phospho-D-ribosyl)imidazole from N(2)-formyl-N(1)-(5-phospho-D-ribosyl)glycinamide: step 2/2. The polypeptide is Phosphoribosylformylglycinamidine cyclo-ligase (Chelativorans sp. (strain BNC1)).